The chain runs to 311 residues: L-lactate dehydrogenase (311 aa).

Residues valine 12, aspartate 33, lysine 38, tyrosine 63, and 77–78 contribute to the NAD(+) site; that span reads GA. 2 residues coordinate substrate: glutamine 80 and arginine 86. Residues serine 99, 116-118, and serine 141 contribute to the NAD(+) site; that span reads VTN. 118–121 serves as a coordination point for substrate; it reads NPVD. 146–149 is a substrate binding site; the sequence is DSSR. Beta-D-fructose 1,6-bisphosphate contacts are provided by arginine 151 and histidine 166. The Proton acceptor role is filled by histidine 173. A Phosphotyrosine modification is found at tyrosine 219. Position 228 (threonine 228) interacts with substrate.

The protein belongs to the LDH/MDH superfamily. LDH family. In terms of assembly, homotetramer.

The protein resides in the cytoplasm. It catalyses the reaction (S)-lactate + NAD(+) = pyruvate + NADH + H(+). It participates in fermentation; pyruvate fermentation to lactate; (S)-lactate from pyruvate: step 1/1. Allosterically activated by fructose 1,6-bisphosphate (FBP). In terms of biological role, catalyzes the conversion of lactate to pyruvate. This chain is L-lactate dehydrogenase, found in Thermoanaerobacterium saccharolyticum (strain DSM 8691 / JW/SL-YS485).